A 224-amino-acid chain; its full sequence is MPGRAPLHTVPGALGPWLLGCLWAWTLCGLCSLGAVGAPRPCQAPQQWEGRQVMYQQSSGRNSRALLSYDGLNQRVRVLDERKALIPCKRLFEYILLYKDGVMFQIEQATKQCSKMTLTEPWDPLDIPQNSTFEDQYSIGGPQEQIMVQEWSDRKSARSYETWIGIYTVKDCYPVQETFTKNYSVILSTRFFDIQLGIKDPSVFTPPSTCQIAQLEKMSEDCSW.

The signal sequence occupies residues 1-37; that stretch reads MPGRAPLHTVPGALGPWLLGCLWAWTLCGLCSLGAVG. Cystine bridges form between Cys42-Cys172, Cys88-Cys222, and Cys113-Cys210. N-linked (GlcNAc...) asparagine glycosylation is found at Asn130 and Asn182.

It belongs to the ependymin family. Homodimer. N-glycosylated; the glycan contains mannose-6-phosphate moieties.

It localises to the lysosome lumen. Its subcellular location is the secreted. Binds anionic lipids and gangliosides at acidic pH. In Macaca fascicularis (Crab-eating macaque), this protein is Mammalian ependymin-related protein 1 (EPDR1).